The sequence spans 211 residues: MGKIIFVSGIDTDIGKTIATGFYAKRLMQQGFSVITQKMIQTGCQHISADIIKHRQLQGIELTAEDLNGITCPYLFRYPCSPHLAAEMENNPILPSKIAQASALLAQKYDYVLLEGAGGLAVPYNSQQTTLDYIVEQQLPLILVTSAKLGSINHTLLSLIVCQQHKIEMEAVIYNTYPLEDEKIAKSTQLYLQQYIKQHFPNTEFLVMDRQ.

Position 13–18 (13–18 (DIGKTI)) interacts with ATP. Mg(2+) is bound at residue threonine 17. The active site involves lysine 38. A substrate-binding site is contributed by threonine 42. Residues aspartate 50, 115-118 (EGAG), and 175-176 (NT) each bind ATP. Aspartate 50 and glutamate 115 together coordinate Mg(2+).

The protein belongs to the dethiobiotin synthetase family. As to quaternary structure, homodimer. Mg(2+) is required as a cofactor.

Its subcellular location is the cytoplasm. It carries out the reaction (7R,8S)-7,8-diammoniononanoate + CO2 + ATP = (4R,5S)-dethiobiotin + ADP + phosphate + 3 H(+). It participates in cofactor biosynthesis; biotin biosynthesis; biotin from 7,8-diaminononanoate: step 1/2. Its function is as follows. Catalyzes a mechanistically unusual reaction, the ATP-dependent insertion of CO2 between the N7 and N8 nitrogen atoms of 7,8-diaminopelargonic acid (DAPA, also called 7,8-diammoniononanoate) to form a ureido ring. The chain is ATP-dependent dethiobiotin synthetase BioD 2 from Haemophilus ducreyi (strain 35000HP / ATCC 700724).